The chain runs to 174 residues: Crossover junction endodeoxyribonuclease RuvC (174 aa).

Catalysis depends on residues aspartate 8, glutamate 67, and aspartate 139. Mg(2+)-binding residues include aspartate 8, glutamate 67, and aspartate 139.

Belongs to the RuvC family. Homodimer which binds Holliday junction (HJ) DNA. The HJ becomes 2-fold symmetrical on binding to RuvC with unstacked arms; it has a different conformation from HJ DNA in complex with RuvA. In the full resolvosome a probable DNA-RuvA(4)-RuvB(12)-RuvC(2) complex forms which resolves the HJ. Mg(2+) is required as a cofactor.

Its subcellular location is the cytoplasm. The catalysed reaction is Endonucleolytic cleavage at a junction such as a reciprocal single-stranded crossover between two homologous DNA duplexes (Holliday junction).. Functionally, the RuvA-RuvB-RuvC complex processes Holliday junction (HJ) DNA during genetic recombination and DNA repair. Endonuclease that resolves HJ intermediates. Cleaves cruciform DNA by making single-stranded nicks across the HJ at symmetrical positions within the homologous arms, yielding a 5'-phosphate and a 3'-hydroxyl group; requires a central core of homology in the junction. The consensus cleavage sequence is 5'-(A/T)TT(C/G)-3'. Cleavage occurs on the 3'-side of the TT dinucleotide at the point of strand exchange. HJ branch migration catalyzed by RuvA-RuvB allows RuvC to scan DNA until it finds its consensus sequence, where it cleaves and resolves the cruciform DNA. The chain is Crossover junction endodeoxyribonuclease RuvC from Pseudomonas savastanoi pv. phaseolicola (strain 1448A / Race 6) (Pseudomonas syringae pv. phaseolicola (strain 1448A / Race 6)).